Reading from the N-terminus, the 226-residue chain is Ribosome maturation factor RimM (226 aa).

Positions 144–225 (ADEFYWVDLI…RIVVDWEADY (82 aa)) constitute a PRC barrel domain.

The protein belongs to the RimM family. In terms of assembly, binds ribosomal protein uS19.

The protein resides in the cytoplasm. Functionally, an accessory protein needed during the final step in the assembly of 30S ribosomal subunit, possibly for assembly of the head region. Essential for efficient processing of 16S rRNA. May be needed both before and after RbfA during the maturation of 16S rRNA. It has affinity for free ribosomal 30S subunits but not for 70S ribosomes. This Burkholderia ambifaria (strain ATCC BAA-244 / DSM 16087 / CCUG 44356 / LMG 19182 / AMMD) (Burkholderia cepacia (strain AMMD)) protein is Ribosome maturation factor RimM.